A 148-amino-acid polypeptide reads, in one-letter code: Receptor activity-modifying protein 3 (148 aa).

A signal peptide spans 1–23 (METGALRRPQLLPLLLLLCGGCP). Residues 24 to 113 (RAGGCNETGM…CTVDRVHLED (90 aa)) are Extracellular-facing. Asn-29, Asn-58, Asn-71, and Asn-103 each carry an N-linked (GlcNAc...) asparagine glycan. 2 cysteine pairs are disulfide-bonded: Cys-40–Cys-72 and Cys-57–Cys-104. The helical transmembrane segment at 114–138 (PPDEVLIPLIVIPVVLTVAMAGLVV) threads the bilayer. The Cytoplasmic portion of the chain corresponds to 139–148 (WRSKRTDTLL).

The protein belongs to the RAMP family. Heterodimer of CALCRL and RAMP3; interaction induces allosteric modulation of CALCRL function and ligand specificity for adrenomedullin/ADM and intermedin/ADM2. Heterodimer of CALCR and RAMP3; interaction form the receptor complex AMYR3 for amylin/IAPP. Interacts with GPER1. As to expression, strongly expressed in lung, breast, immune system and fetal tissues.

The protein resides in the cell membrane. It is found in the membrane. Its function is as follows. Accessory protein that interacts with and modulates the function of G-protein coupled receptors including calcitonin gene-related peptide type 1 receptor (CALCRL), calcitonin receptor (CALCR) and G-protein coupled estrogen receptor 1 (GPER1). Required for the transport of CALCRL and GPER1 receptors to the plasma membrane. Plays a role in cardioprotection by reducing cardiac hypertrophy and perivascular fibrosis in a GPER1-dependent manner. Together with CALCRL, form a receptor complex for adrenomedullin/ADM and intermedin/ADM2. Together with CALCR, act as a receptor complex for amylin/IAPP. The sequence is that of Receptor activity-modifying protein 3 from Homo sapiens (Human).